The following is a 273-amino-acid chain: Shikimate dehydrogenase (NADP(+)) (273 aa).

Shikimate-binding positions include 15-17 (SQS) and threonine 62. Lysine 66 acts as the Proton acceptor in catalysis. Residue glutamate 78 coordinates NADP(+). Asparagine 87 and aspartate 102 together coordinate shikimate. Residues 127–131 (GAGGA), 151–156 (NRTVTK), and methionine 215 each bind NADP(+). Tyrosine 217 is a binding site for shikimate. Glycine 239 provides a ligand contact to NADP(+).

It belongs to the shikimate dehydrogenase family. Homodimer.

It catalyses the reaction shikimate + NADP(+) = 3-dehydroshikimate + NADPH + H(+). It functions in the pathway metabolic intermediate biosynthesis; chorismate biosynthesis; chorismate from D-erythrose 4-phosphate and phosphoenolpyruvate: step 4/7. Its function is as follows. Involved in the biosynthesis of the chorismate, which leads to the biosynthesis of aromatic amino acids. Catalyzes the reversible NADPH linked reduction of 3-dehydroshikimate (DHSA) to yield shikimate (SA). In Laribacter hongkongensis (strain HLHK9), this protein is Shikimate dehydrogenase (NADP(+)).